A 470-amino-acid polypeptide reads, in one-letter code: Cell division protein FtsP (470 aa).

The segment at residues 1–27 (MSFSRRQFLQASGIALCAGAIPLRANA) is a signal peptide (tat-type signal). The region spanning 222–287 (VEVSRGWVRL…RREILVDMTN (66 aa)) is the Plastocyanin-like domain.

Belongs to the FtsP family. Predicted to be exported by the Tat system. The position of the signal peptide cleavage has not been experimentally proven.

It is found in the periplasm. Functionally, cell division protein that is required for growth during stress conditions. May be involved in protecting or stabilizing the divisomal assembly under conditions of stress. The protein is Cell division protein FtsP of Salmonella typhi.